A 351-amino-acid polypeptide reads, in one-letter code: D-alanine--D-alanine ligase (351 aa).

The ATP-grasp domain occupies 141-349; it reads KAAFSAAGLP…ISQLVARLIE (209 aa). Residue 176 to 231 coordinates ATP; sequence ETQLGYPCFIKPANLGSSVGISKAYDKKELLNGLDLAAQLDSRIVVEKNIKARELE. Positions 302, 316, and 318 each coordinate Mg(2+).

The protein belongs to the D-alanine--D-alanine ligase family. It depends on Mg(2+) as a cofactor. Requires Mn(2+) as cofactor.

It is found in the cytoplasm. The catalysed reaction is 2 D-alanine + ATP = D-alanyl-D-alanine + ADP + phosphate + H(+). It participates in cell wall biogenesis; peptidoglycan biosynthesis. Its function is as follows. Cell wall formation. This Prochlorococcus marinus (strain SARG / CCMP1375 / SS120) protein is D-alanine--D-alanine ligase.